We begin with the raw amino-acid sequence, 177 residues long: Protein GrpE (177 aa).

Residues M1–V26 are disordered. The segment covering L10–V26 has biased composition (acidic residues).

Belongs to the GrpE family. In terms of assembly, homodimer.

Its subcellular location is the cytoplasm. In terms of biological role, participates actively in the response to hyperosmotic and heat shock by preventing the aggregation of stress-denatured proteins, in association with DnaK and GrpE. It is the nucleotide exchange factor for DnaK and may function as a thermosensor. Unfolded proteins bind initially to DnaJ; upon interaction with the DnaJ-bound protein, DnaK hydrolyzes its bound ATP, resulting in the formation of a stable complex. GrpE releases ADP from DnaK; ATP binding to DnaK triggers the release of the substrate protein, thus completing the reaction cycle. Several rounds of ATP-dependent interactions between DnaJ, DnaK and GrpE are required for fully efficient folding. The sequence is that of Protein GrpE from Streptococcus agalactiae serotype Ia (strain ATCC 27591 / A909 / CDC SS700).